The primary structure comprises 198 residues: Recombination protein RecR (198 aa).

The segment at 57–72 adopts a C4-type zinc-finger fold; the sequence is CSLCGNLDTVDPCHIC. The Toprim domain maps to 80–175; sequence GLICVVETVG…TVTRVGHGVP (96 aa).

Belongs to the RecR family.

In terms of biological role, may play a role in DNA repair. It seems to be involved in an RecBC-independent recombinational process of DNA repair. It may act with RecF and RecO. This is Recombination protein RecR from Gluconobacter oxydans (strain 621H) (Gluconobacter suboxydans).